A 616-amino-acid polypeptide reads, in one-letter code: Vitamin B12 transporter BtuB (616 aa).

A signal peptide spans 1–20 (MIKKISLLTALSVTAFSGWA). The short motif at 26–33 (DSLVVTAN) is the TonB box element. The region spanning 38–152 (PVNTVLAPTS…IGGVVNIITT (115 aa)) is the TBDR plug domain. Residues L83, S85, N92, and 110-111 (VT) contribute to the cyanocob(III)alamin site. The TBDR beta-barrel domain maps to 155 to 616 (KDGTTLNAGI…EYTLSGSYTF (462 aa)). A run of 3 beta stranded transmembrane segments spans residues 158–165 (TTLNAGIG), 169–178 (YQNYGGSTQQ), and 184–195 (TRVTLAGDYTYT). D199, Q211, D213, and D215 together coordinate Ca(2+). Transmembrane regions (beta stranded) follow at residues 217-227 (FMNKTLYGALE) and 232-248 (DQWTGFVRGYGYSNRTA). 3 residues coordinate Ca(2+): Y249, D250, and D263. The next 17 membrane-spanning stretches (beta stranded) occupy residues 265–279 (RQLYSQTWDAGLRFN), 281–298 (DLFHSQLLSSYSHSKDYN), 311–327 (TLDEIKQYNVQWTNAVD), 330–339 (HGNIGAGVDW), 355–371 (YDLRNTGVYLTALQKFG), 373–383 (VTLEGAVRSDD), 387–402 (FGRHGTWQSSAAWEFI), 405–419 (YRFIASYGTAYKAPN), 436–445 (ESKQWEGAFE), 451–460 (VNWRVSAYRN), 475–492 (YYNVGKARIKGVEATASF), 496–511 (PLTHTLGYDYVDARNA), 519–531 (RRAKQQVKYQLDT), 537–552 (DWSLTYHYLGTRYDTD), 560–574 (NVKLGGVSLWDVAVS), 587–598 (IANLFDKDYETA), and 604–616 (AGREYTLSGSYTF). T311 contacts cyanocob(III)alamin. R519 is a cyanocob(III)alamin binding site. The TonB C-terminal box signature appears at 599–616 (YGYATAGREYTLSGSYTF).

This sequence belongs to the TonB-dependent receptor family. BtuB (TC 1.B.14.3.1) subfamily.

It localises to the cell outer membrane. Functionally, involved in the active translocation of vitamin B12 (cyanocobalamin) across the outer membrane to the periplasmic space. It derives its energy for transport by interacting with the trans-periplasmic membrane protein TonB. This chain is Vitamin B12 transporter BtuB, found in Cronobacter sakazakii (strain ATCC BAA-894) (Enterobacter sakazakii).